The following is a 330-amino-acid chain: Atypical chemokine receptor 1 (330 aa).

The Extracellular segment spans residues M1 to P57. N-linked (GlcNAc...) asparagine glycans are attached at residues N12, N35, and N52. 2 disulfides stabilise this stretch: C45–C270 and C123–C189. Residues F58–L78 form a helical membrane-spanning segment. Over R79–D89 the chain is Cytoplasmic. The chain crosses the membrane as a helical span at residues R90 to L110. Residues A111–C123 are Extracellular-facing. The chain crosses the membrane as a helical span at residues H124–L147. Topologically, residues G148–R160 are cytoplasmic. A helical transmembrane segment spans residues L161–G181. Over S182 to R201 the chain is Extracellular. A helical transmembrane segment spans residues Y202–T222. The Cytoplasmic portion of the chain corresponds to K223–D238. A helical transmembrane segment spans residues V239 to L259. The Extracellular portion of the chain corresponds to V260 to D281. Residues V282–C302 traverse the membrane as a helical segment. At Y303 to S330 the chain is on the cytoplasmic side.

Belongs to the G-protein coupled receptor 1 family. Atypical chemokine receptor subfamily.

The protein resides in the early endosome. The protein localises to the recycling endosome. Its subcellular location is the membrane. Its function is as follows. Atypical chemokine receptor that controls chemokine levels and localization via high-affinity chemokine binding that is uncoupled from classic ligand-driven signal transduction cascades, resulting instead in chemokine sequestration, degradation, or transcytosis. Also known as interceptor (internalizing receptor) or chemokine-scavenging receptor or chemokine decoy receptor. Has a promiscuous chemokine-binding profile, interacting with inflammatory chemokines of both the CXC and the CC subfamilies but not with homeostatic chemokines. Acts as a receptor for chemokines including CCL2, CCL5, CCL7, CCL11, CCL13, CCL14, CCL17, CXCL5, CXCL6, IL8/CXCL8, CXCL11, GRO, RANTES, MCP-1 and TARC. May regulate chemokine bioavailability and, consequently, leukocyte recruitment through two distinct mechanisms: when expressed in endothelial cells, it sustains the abluminal to luminal transcytosis of tissue-derived chemokines and their subsequent presentation to circulating leukocytes; when expressed in erythrocytes, serves as blood reservoir of cognate chemokines but also as a chemokine sink, buffering potential surges in plasma chemokine levels. In Bos taurus (Bovine), this protein is Atypical chemokine receptor 1 (ACKR1).